A 206-amino-acid chain; its full sequence is FMN-dependent NADH:quinone oxidoreductase 2 (206 aa).

Residues serine 10, serine 16–serine 18, and serine 140–glycine 143 contribute to the FMN site.

It belongs to the azoreductase type 1 family. Homodimer. FMN is required as a cofactor.

The enzyme catalyses 2 a quinone + NADH + H(+) = 2 a 1,4-benzosemiquinone + NAD(+). It carries out the reaction N,N-dimethyl-1,4-phenylenediamine + anthranilate + 2 NAD(+) = 2-(4-dimethylaminophenyl)diazenylbenzoate + 2 NADH + 2 H(+). Quinone reductase that provides resistance to thiol-specific stress caused by electrophilic quinones. Its function is as follows. Also exhibits azoreductase activity. Catalyzes the reductive cleavage of the azo bond in aromatic azo compounds to the corresponding amines. The chain is FMN-dependent NADH:quinone oxidoreductase 2 from Cupriavidus pinatubonensis (strain JMP 134 / LMG 1197) (Cupriavidus necator (strain JMP 134)).